A 103-amino-acid polypeptide reads, in one-letter code: Cystatin-A8 (103 aa).

Residues 1 to 20 are disordered; it reads MESEEMLAGGLTEPRPATPE. The Secondary area of contact motif lies at 51–55; the sequence is QVVAG.

This sequence belongs to the cystatin family.

The protein resides in the cytoplasm. This is an intracellular thiol proteinase inhibitor. This is Cystatin-A8 from Sus scrofa (Pig).